The chain runs to 1875 residues: Soluble starch synthase 3a, chloroplastic/amyloplastic (1875 aa).

Residues 1-49 (MEMALRPQSLLCPRSRLKVVIRPASSASGGGLAQYFLMTRRYTGSRIVR) constitute a chloroplast transit peptide. Positions 1007 to 1065 (KRELERVATEEAERRRHAEEQQRMGEQRAAEQAAREQAKKEIELKKNKLQNLLSSARTH) form a coiled coil. The disordered stretch occupies residues 1014–1043 (ATEEAERRRHAEEQQRMGEQRAAEQAAREQ).

It belongs to the glycosyltransferase 1 family. Bacterial/plant glycogen synthase subfamily. In terms of tissue distribution, expressed in the endosperm.

The protein resides in the plastid. The protein localises to the chloroplast. Its subcellular location is the amyloplast. The enzyme catalyses [(1-&gt;4)-alpha-D-glucosyl](n) + ADP-alpha-D-glucose = [(1-&gt;4)-alpha-D-glucosyl](n+1) + ADP + H(+). It participates in glycan biosynthesis; starch biosynthesis. Involved in starch synthesis in endosperm amyloplasts. Plays an important role in the elongation of amylopectin B chains. This Oryza sativa subsp. japonica (Rice) protein is Soluble starch synthase 3a, chloroplastic/amyloplastic.